We begin with the raw amino-acid sequence, 326 residues long: Probable sodium/potassium-transporting ATPase subunit beta-3 (326 aa).

The Cytoplasmic portion of the chain corresponds to 1–59 (MMSSRTRKIYLFVFMFISTSLQLMNGEAKAEPETFRQFLYNKQKGTVLGRTGTSWCQIT). A helical; Signal-anchor for type II membrane protein membrane pass occupies residues 60–80 (VFYIIFYIFLSAFFIGCLAIF). Over 81-326 (LKTLDPKVPR…DKKPVAAPAA (246 aa)) the chain is Lumenal. N-linked (GlcNAc...) asparagine glycans are attached at residues N144 and N147. Residues C234 and C291 are joined by a disulfide bond.

Belongs to the X(+)/potassium ATPases subunit beta family. As to quaternary structure, the sodium/potassium-transporting ATPase is composed of a catalytic alpha subunit, an auxiliary non-catalytic beta subunit and an additional regulatory subunit.

Its subcellular location is the cell membrane. Functionally, this is the non-catalytic component of the active enzyme, which catalyzes the hydrolysis of ATP coupled with the exchange of Na(+) and K(+) ions across the plasma membrane. The beta subunit regulates, through assembly of alpha/beta heterodimers, the number of sodium pumps transported to the plasma membrane. Implicated in genomic response to various soil bacteria that affects fitness, lifespan and brood size. The chain is Probable sodium/potassium-transporting ATPase subunit beta-3 (nkb-3) from Caenorhabditis briggsae.